The following is a 236-amino-acid chain: UPF0502 protein BamMC406_5439 (236 aa).

Belongs to the UPF0502 family.

The chain is UPF0502 protein BamMC406_5439 from Burkholderia ambifaria (strain MC40-6).